The following is a 257-amino-acid chain: Phosphate import ATP-binding protein PstB (257 aa).

Residues leucine 11 to isoleucine 252 enclose the ABC transporter domain. Residue glycine 43–serine 50 coordinates ATP.

Belongs to the ABC transporter superfamily. Phosphate importer (TC 3.A.1.7) family. In terms of assembly, the complex is composed of two ATP-binding proteins (PstB), two transmembrane proteins (PstC and PstA) and a solute-binding protein (PstS).

The protein resides in the cell inner membrane. It carries out the reaction phosphate(out) + ATP + H2O = ADP + 2 phosphate(in) + H(+). In terms of biological role, part of the ABC transporter complex PstSACB involved in phosphate import. Responsible for energy coupling to the transport system. The sequence is that of Phosphate import ATP-binding protein PstB from Chromobacterium violaceum (strain ATCC 12472 / DSM 30191 / JCM 1249 / CCUG 213 / NBRC 12614 / NCIMB 9131 / NCTC 9757 / MK).